The following is a 71-amino-acid chain: Translation initiation factor IF-1 (71 aa).

Residues 1–71 (MSKQEMLSFS…LTKGRITFRG (71 aa)) form the S1-like domain.

This sequence belongs to the IF-1 family. Component of the 30S ribosomal translation pre-initiation complex which assembles on the 30S ribosome in the order IF-2 and IF-3, IF-1 and N-formylmethionyl-tRNA(fMet); mRNA recruitment can occur at any time during PIC assembly.

The protein localises to the cytoplasm. One of the essential components for the initiation of protein synthesis. Stabilizes the binding of IF-2 and IF-3 on the 30S subunit to which N-formylmethionyl-tRNA(fMet) subsequently binds. Helps modulate mRNA selection, yielding the 30S pre-initiation complex (PIC). Upon addition of the 50S ribosomal subunit IF-1, IF-2 and IF-3 are released leaving the mature 70S translation initiation complex. The chain is Translation initiation factor IF-1 from Pelagibacter ubique (strain HTCC1062).